The chain runs to 26 residues: Dermaseptin-J3 (26 aa).

Val-26 bears the Valine amide mark.

As to expression, expressed by the skin glands.

It is found in the secreted. In terms of biological role, has antimicrobial activity. In Phasmahyla jandaia (Jandaia leaf frog), this protein is Dermaseptin-J3.